The chain runs to 539 residues: Membrane protein insertase YidC (539 aa).

A helical transmembrane segment spans residues 6–26; the sequence is NILLIALALVSFLLFQQWNVA. Polar residues predominate over residues 35-44; it reads EQAQSGSTLP. Residues 35-55 form a disordered region; sequence EQAQSGSTLPAPSYADDLDPA. The next 4 membrane-spanning stretches (helical) occupy residues 341–361, 416–436, 454–474, and 495–515; these read SFIQGIVVNWGLAIICLTFIV, LGGCLPILLQMPIFISLYWAL, LSAQDPYYILPLLMGASMFLI, and PVMFTFFFLFFPSGLVLYWLV.

It belongs to the OXA1/ALB3/YidC family. Type 1 subfamily. As to quaternary structure, interacts with the Sec translocase complex via SecD. Specifically interacts with transmembrane segments of nascent integral membrane proteins during membrane integration.

It is found in the cell inner membrane. Functionally, required for the insertion and/or proper folding and/or complex formation of integral membrane proteins into the membrane. Involved in integration of membrane proteins that insert both dependently and independently of the Sec translocase complex, as well as at least some lipoproteins. Aids folding of multispanning membrane proteins. The sequence is that of Membrane protein insertase YidC from Vibrio atlanticus (strain LGP32) (Vibrio splendidus (strain Mel32)).